A 120-amino-acid chain; its full sequence is Large ribosomal subunit protein uL18 (120 aa).

Positions 1 to 10 (MSTPRKEQTQ) are enriched in basic and acidic residues. The segment at 1 to 25 (MSTPRKEQTQKRHRRLRRHLEGTPE) is disordered.

Belongs to the universal ribosomal protein uL18 family. As to quaternary structure, part of the 50S ribosomal subunit; part of the 5S rRNA/L5/L18/L25 subcomplex. Contacts the 5S and 23S rRNAs.

Functionally, this is one of the proteins that bind and probably mediate the attachment of the 5S RNA into the large ribosomal subunit, where it forms part of the central protuberance. The sequence is that of Large ribosomal subunit protein uL18 from Synechococcus sp. (strain RCC307).